Consider the following 98-residue polypeptide: Keratinocyte differentiation-associated protein (98 aa).

The signal sequence occupies residues 1 to 22 (MKIPILPIVALLSLLALHAAQG).

In terms of tissue distribution, ubiquitously expressed in stratified epithelium.

It localises to the secreted. Functionally, may act as a soluble regulator of keratinocyte differentiation. May play an important role in embryonic skin morphogenesis. The protein is Keratinocyte differentiation-associated protein of Rattus norvegicus (Rat).